We begin with the raw amino-acid sequence, 285 residues long: Probable endonuclease 4 (285 aa).

Zn(2+) is bound by residues H69, H109, E145, D179, H182, H216, D229, H231, and E261.

The protein belongs to the AP endonuclease 2 family. Requires Zn(2+) as cofactor.

The enzyme catalyses Endonucleolytic cleavage to 5'-phosphooligonucleotide end-products.. Its function is as follows. Endonuclease IV plays a role in DNA repair. It cleaves phosphodiester bonds at apurinic or apyrimidinic (AP) sites, generating a 3'-hydroxyl group and a 5'-terminal sugar phosphate. The polypeptide is Probable endonuclease 4 (Shigella dysenteriae serotype 1 (strain Sd197)).